Here is a 147-residue protein sequence, read N- to C-terminus: Ponticulin-like protein C5 (147 aa).

An N-terminal signal peptide occupies residues 1 to 20 (MKLNNSLLLLIVAIIASSNA). Asparagine 118 carries GPI-like-anchor amidated asparagine lipidation. A glycan (N-linked (GlcNAc...) asparagine) is linked at asparagine 118. The propeptide at 119–147 (SSESDSSDSTRIGASFALFALALLSMLAL) is removed in mature form.

The protein belongs to the ponticulin family. In terms of processing, the GPI-like-anchor contains a phosphoceramide group, rather than a phosphatidyl group.

The protein localises to the cell membrane. The sequence is that of Ponticulin-like protein C5 (ponC5) from Dictyostelium discoideum (Social amoeba).